A 296-amino-acid polypeptide reads, in one-letter code: Farnesyl diphosphate synthase (296 aa).

Isopentenyl diphosphate is bound by residues lysine 46, arginine 49, and histidine 78. Mg(2+) is bound by residues aspartate 85 and aspartate 91. Arginine 96 lines the (2E)-geranyl diphosphate pocket. Residue arginine 97 coordinates isopentenyl diphosphate. 4 residues coordinate (2E)-geranyl diphosphate: lysine 182, threonine 183, glutamine 220, and lysine 237.

The protein belongs to the FPP/GGPP synthase family. The cofactor is Mg(2+).

Its subcellular location is the cytoplasm. It catalyses the reaction isopentenyl diphosphate + (2E)-geranyl diphosphate = (2E,6E)-farnesyl diphosphate + diphosphate. The protein is Farnesyl diphosphate synthase (ispA) of Bacillus subtilis (strain 168).